We begin with the raw amino-acid sequence, 463 residues long: uncharacterized protein (463 aa).

Belongs to the UbiD family.

This is an uncharacterized protein from Rhodospirillum rubrum.